Reading from the N-terminus, the 411-residue chain is Dual specificity protein phosphatase Mpk3 (411 aa).

The region spanning 22–149 (DSKDLILLDC…FRQAFPEWCE (128 aa)) is the Rhodanese domain. The segment covering 184–197 (DSACSSSAESSDCE) has biased composition (low complexity). The segment at 184–209 (DSACSSSAESSDCESSSHHHHHHSHH) is disordered. Positions 214-358 (APVEIIPGLL…LLSFESQLRL (145 aa)) constitute a Tyrosine-protein phosphatase domain. Catalysis depends on cysteine 302, which acts as the Phosphocysteine intermediate.

Belongs to the protein-tyrosine phosphatase family. Non-receptor class dual specificity subfamily. Interacts (via N-terminal region) with phosphorylated rl. As to expression, ubiquitous expression in eye and wing imaginal disks. Enriched in ovary.

The protein resides in the cytoplasm. It carries out the reaction O-phospho-L-tyrosyl-[protein] + H2O = L-tyrosyl-[protein] + phosphate. The enzyme catalyses O-phospho-L-seryl-[protein] + H2O = L-seryl-[protein] + phosphate. It catalyses the reaction O-phospho-L-threonyl-[protein] + H2O = L-threonyl-[protein] + phosphate. Its activity is regulated as follows. Activity abolished by tyrosine phosphatase inhibitor sodium vanadate. Activated by rl. Its function is as follows. Negatively regulates the activity of members of the MAP kinase family in response to changes in the cellular environment. Has a specificity for the ERK family. Acts as a negative regulator in a variety of developmental processes including cell differentiation and proliferation controlled by the Ras/ERK pathway. Suppresses the photoreceptor cell differentiation and wing vein formation. Required for proper oogenesis and early embryogenesis. Functions autonomously in a subset of photoreceptor progenitor cells in eye imaginal disks. Also appears to be required in surrounding non-neuronal cells for ommatidial patterning and photoreceptor differentiation. Plays a role in the maintenance of epithelial integrity during tracheal development. The sequence is that of Dual specificity protein phosphatase Mpk3 (Mkp3) from Drosophila melanogaster (Fruit fly).